A 452-amino-acid chain; its full sequence is tRNA modification GTPase MnmE (452 aa).

(6S)-5-formyl-5,6,7,8-tetrahydrofolate contacts are provided by arginine 21, glutamate 78, and lysine 118. The TrmE-type G domain occupies glycine 214–glycine 375. K(+) is bound at residue asparagine 224. GTP contacts are provided by residues asparagine 224–serine 229, threonine 243–threonine 249, and aspartate 268–glycine 271. Serine 228 is a Mg(2+) binding site. Positions 243, 245, and 248 each coordinate K(+). Threonine 249 contributes to the Mg(2+) binding site. Residue lysine 452 participates in (6S)-5-formyl-5,6,7,8-tetrahydrofolate binding.

The protein belongs to the TRAFAC class TrmE-Era-EngA-EngB-Septin-like GTPase superfamily. TrmE GTPase family. Homodimer. Heterotetramer of two MnmE and two MnmG subunits. The cofactor is K(+).

The protein localises to the cytoplasm. Exhibits a very high intrinsic GTPase hydrolysis rate. Involved in the addition of a carboxymethylaminomethyl (cmnm) group at the wobble position (U34) of certain tRNAs, forming tRNA-cmnm(5)s(2)U34. In Haemophilus ducreyi (strain 35000HP / ATCC 700724), this protein is tRNA modification GTPase MnmE.